A 213-amino-acid polypeptide reads, in one-letter code: FMN-dependent NADH:quinone oxidoreductase 1 (213 aa).

An FMN-binding site is contributed by 18–20; sequence SVS.

Belongs to the azoreductase type 1 family. As to quaternary structure, homodimer. It depends on FMN as a cofactor.

The enzyme catalyses 2 a quinone + NADH + H(+) = 2 a 1,4-benzosemiquinone + NAD(+). It carries out the reaction N,N-dimethyl-1,4-phenylenediamine + anthranilate + 2 NAD(+) = 2-(4-dimethylaminophenyl)diazenylbenzoate + 2 NADH + 2 H(+). Quinone reductase that provides resistance to thiol-specific stress caused by electrophilic quinones. In terms of biological role, also exhibits azoreductase activity. Catalyzes the reductive cleavage of the azo bond in aromatic azo compounds to the corresponding amines. The chain is FMN-dependent NADH:quinone oxidoreductase 1 from Bacillus cereus (strain ATCC 10987 / NRS 248).